We begin with the raw amino-acid sequence, 1074 residues long: Isoleucine--tRNA ligase (1074 aa).

The 'HIGH' region signature appears at 50–60 (PYTSGAAHMGT). The 'KMSKS' region signature appears at 605-609 (GMSKS). ATP is bound at residue Lys608.

Belongs to the class-I aminoacyl-tRNA synthetase family. IleS type 2 subfamily. As to quaternary structure, monomer. Zn(2+) is required as a cofactor.

Its subcellular location is the cytoplasm. It carries out the reaction tRNA(Ile) + L-isoleucine + ATP = L-isoleucyl-tRNA(Ile) + AMP + diphosphate. Its function is as follows. Catalyzes the attachment of isoleucine to tRNA(Ile). As IleRS can inadvertently accommodate and process structurally similar amino acids such as valine, to avoid such errors it has two additional distinct tRNA(Ile)-dependent editing activities. One activity is designated as 'pretransfer' editing and involves the hydrolysis of activated Val-AMP. The other activity is designated 'posttransfer' editing and involves deacylation of mischarged Val-tRNA(Ile). The protein is Isoleucine--tRNA ligase of Haloarcula marismortui (strain ATCC 43049 / DSM 3752 / JCM 8966 / VKM B-1809) (Halobacterium marismortui).